The primary structure comprises 371 residues: Jasmonate-induced oxygenase 2 (371 aa).

Residues 219 to 320 (NIGACLRVNY…RVSLAFFYNP (102 aa)) form the Fe2OG dioxygenase domain. Position 225 (Arg-225) interacts with jasmonate. 2-oxoglutarate is bound by residues Asn-227 and Tyr-229. The Fe cation site is built by His-244, Asp-246, and His-301. Residues Arg-311 and Ser-313 each contribute to the 2-oxoglutarate site. Residues Arg-350 and Arg-354 each contribute to the jasmonate site.

Belongs to the iron/ascorbate-dependent oxidoreductase family. L-ascorbate is required as a cofactor. Fe(2+) serves as cofactor.

It catalyses the reaction jasmonate + 2-oxoglutarate + O2 = (1R,2R)-12-hydroxyjasmonate + succinate + CO2. Its function is as follows. 2-oxoglutarate-dependent dioxygenase involved in the oxidation of jasmonate (JA), a stress-induced phytohormone synthesized in response to attack by pathogens and herbivores, which triggers the activation of defense responses via the JA-mediated signaling pathway. Converts JA to 12-hydroxyjasmonate (12OH-JA), an inactive form of JA. Is specific to free JA, and cannot oxidize the bioactive form jasmonoyl-L-isoleucine (JA-Ile) or other JA-amino acid conjugates. Prevents over-accumulation of JA and indirectly its bioactive form JA-Ile under stress response. Acts as a negative regulator of JA-mediated defense signaling, by contributing to 12OH-JA accumulation, which represses JA defense responses upon infection by the fungal pathogen Botrytis cinerea. Acts as a negative regulator of JA-mediated defense responses upon infestation by the herbivorous caterpillar Mamestra brassicae. May be involved in the catabolism of cytotoxic polycyclic aromatic hydrocarbons (PAHs). In Arabidopsis thaliana (Mouse-ear cress), this protein is Jasmonate-induced oxygenase 2.